Reading from the N-terminus, the 268-residue chain is Fc receptor-like protein 6 (268 aa).

An N-terminal signal peptide occupies residues methionine 1 to alanine 16. Residues glutamine 17–proline 215 lie on the Extracellular side of the membrane. Positions proline 114–serine 194 constitute an Ig-like C2-type domain. Cysteine 135 and cysteine 183 are oxidised to a cystine. N-linked (GlcNAc...) asparagine glycosylation is found at asparagine 180 and asparagine 188. Residues isoleucine 216–phenylalanine 236 traverse the membrane as a helical segment. The Cytoplasmic portion of the chain corresponds to phenylalanine 237–lysine 268.

In terms of assembly, interacts with class II MHC.

The protein localises to the cell membrane. In terms of biological role, acts as a MHC class II receptor. When stimulated on its own, does not play a role in cytokine production or the release of cytotoxic granules by NK cells and cytotoxic CD8(+) T cells. Does not act as an Fc receptor. This is Fc receptor-like protein 6 (Fcrl6) from Mus musculus (Mouse).